The sequence spans 631 residues: VPS9 domain-containing protein 1 (631 aa).

A Phosphoserine modification is found at Ser-116. Residues 187–221 adopt a coiled-coil conformation; it reads RQMMENLVIAKAREETLQRKMEERRLRLQEAANRR. The disordered stretch occupies residues 318-379; the sequence is PNPGSRRLRP…ASGLPDKDSS (62 aa). Positions 337–362 are enriched in pro residues; it reads PPEPSAAPRPQDSPPTPPLQPGPVGS. In terms of domain architecture, VPS9 spans 467–630; sequence RAREAALSRS…VELLPRGGLA (164 aa).

Ubiquitous.

The polypeptide is VPS9 domain-containing protein 1 (VPS9D1) (Homo sapiens (Human)).